The following is a 456-amino-acid chain: Probable glycine dehydrogenase (decarboxylating) subunit 1 (456 aa).

It belongs to the GcvP family. N-terminal subunit subfamily. As to quaternary structure, the glycine cleavage system is composed of four proteins: P, T, L and H. In this organism, the P 'protein' is a heterodimer of two subunits.

The enzyme catalyses N(6)-[(R)-lipoyl]-L-lysyl-[glycine-cleavage complex H protein] + glycine + H(+) = N(6)-[(R)-S(8)-aminomethyldihydrolipoyl]-L-lysyl-[glycine-cleavage complex H protein] + CO2. Functionally, the glycine cleavage system catalyzes the degradation of glycine. The P protein binds the alpha-amino group of glycine through its pyridoxal phosphate cofactor; CO(2) is released and the remaining methylamine moiety is then transferred to the lipoamide cofactor of the H protein. The protein is Probable glycine dehydrogenase (decarboxylating) subunit 1 of Legionella pneumophila (strain Lens).